The chain runs to 151 residues: 3-hydroxyacyl-[acyl-carrier-protein] dehydratase FabZ (151 aa).

Residue H57 is part of the active site.

The protein belongs to the thioester dehydratase family. FabZ subfamily.

Its subcellular location is the cytoplasm. The catalysed reaction is a (3R)-hydroxyacyl-[ACP] = a (2E)-enoyl-[ACP] + H2O. Functionally, involved in unsaturated fatty acids biosynthesis. Catalyzes the dehydration of short chain beta-hydroxyacyl-ACPs and long chain saturated and unsaturated beta-hydroxyacyl-ACPs. In Synechococcus sp. (strain CC9605), this protein is 3-hydroxyacyl-[acyl-carrier-protein] dehydratase FabZ.